The sequence spans 46 residues: Endochitinase 1A (46 aa).

The protein belongs to the glycosyl hydrolase 19 family. Chitinase class I subfamily.

It carries out the reaction Random endo-hydrolysis of N-acetyl-beta-D-glucosaminide (1-&gt;4)-beta-linkages in chitin and chitodextrins.. Functionally, defense against chitin-containing fungal and bacterial pathogens. In Arachis hypogaea (Peanut), this protein is Endochitinase 1A.